The following is a 305-amino-acid chain: Ribosomal RNA small subunit methyltransferase H (305 aa).

S-adenosyl-L-methionine-binding positions include 47 to 49 (GGH), aspartate 66, phenylalanine 93, aspartate 108, and glutamine 115.

It belongs to the methyltransferase superfamily. RsmH family.

The protein localises to the cytoplasm. It catalyses the reaction cytidine(1402) in 16S rRNA + S-adenosyl-L-methionine = N(4)-methylcytidine(1402) in 16S rRNA + S-adenosyl-L-homocysteine + H(+). Specifically methylates the N4 position of cytidine in position 1402 (C1402) of 16S rRNA. The sequence is that of Ribosomal RNA small subunit methyltransferase H from Prochlorococcus marinus (strain MIT 9211).